The chain runs to 192 residues: Xanthine phosphoribosyltransferase (192 aa).

Leucine 20 and asparagine 27 together coordinate xanthine. Residue 128-132 (ANGDA) participates in 5-phospho-alpha-D-ribose 1-diphosphate binding. Residue lysine 156 coordinates xanthine.

Belongs to the purine/pyrimidine phosphoribosyltransferase family. Xpt subfamily. As to quaternary structure, homodimer.

It localises to the cytoplasm. It carries out the reaction XMP + diphosphate = xanthine + 5-phospho-alpha-D-ribose 1-diphosphate. The protein operates within purine metabolism; XMP biosynthesis via salvage pathway; XMP from xanthine: step 1/1. Functionally, converts the preformed base xanthine, a product of nucleic acid breakdown, to xanthosine 5'-monophosphate (XMP), so it can be reused for RNA or DNA synthesis. The chain is Xanthine phosphoribosyltransferase from Staphylococcus aureus (strain Mu3 / ATCC 700698).